The chain runs to 255 residues: Phycoerythrobilin:ferredoxin oxidoreductase (255 aa).

The protein belongs to the HY2 family.

The enzyme catalyses (3Z)-phycoerythrobilin + oxidized 2[4Fe-4S]-[ferredoxin] = 15,16-dihydrobiliverdin + reduced 2[4Fe-4S]-[ferredoxin] + 2 H(+). Functionally, catalyzes the two-electron reduction of the C2 and C3(1) diene system of 15,16-dihydrobiliverdin. The polypeptide is Phycoerythrobilin:ferredoxin oxidoreductase (pebB) (Nostoc punctiforme (strain ATCC 29133 / PCC 73102)).